Consider the following 357-residue polypeptide: MSETTDKQLTEAEKRKLLRERRLAKMAQGKASDRLNTILSQGSSVKSVSPPAVTSVLENKATKSTDTATVTDSSTNATSVSPSAAKATPTSTGVSSAISDFDDPEIQDISDVAVNNSGVLALGNLSGLDSNNPSQPNLDEMFQKIMQQQSQHNCDNDNNGENNPMAEMLKMFNSMGGGDNNGGLGGFDSMFSGSPNSPPPESISPEMMKYQADLAKYHTYQEQLWQFRFLVVRILATIFNFAYHFITIPSFTASNHAYVRDLSEVYPLLGFMTIFTSIEVVIIATYYLLFTKLGLFHASNQKSFILKGISTLSMFVPQLLRYEPLVATFLGYKELLGIFVGDLSLVVVMFGLLSFSN.

The Cytoplasmic portion of the chain corresponds to 1-224 (MSETTDKQLT…AKYHTYQEQL (224 aa)). Over residues 65–81 (TDTATVTDSSTNATSVS) the composition is skewed to low complexity. Positions 65–99 (TDTATVTDSSTNATSVSPSAAKATPTSTGVSSAIS) are disordered. Over residues 88–98 (TPTSTGVSSAI) the composition is skewed to polar residues. Residues 225–245 (WQFRFLVVRILATIFNFAYHF) form a helical membrane-spanning segment. The Lumenal segment spans residues 246–270 (ITIPSFTASNHAYVRDLSEVYPLLG). A helical transmembrane segment spans residues 271–290 (FMTIFTSIEVVIIATYYLLF). The Cytoplasmic portion of the chain corresponds to 291–334 (TKLGLFHASNQKSFILKGISTLSMFVPQLLRYEPLVATFLGYKE). Residues 335-355 (LLGIFVGDLSLVVVMFGLLSF) form a helical membrane-spanning segment. Over 356–357 (SN) the chain is Lumenal.

This sequence belongs to the GET2 family. Component of the Golgi to ER traffic (GET) complex, which is composed of GET1, GET2 and GET3. Within the complex, GET1 and GET2 form a heterotetramer which is stabilized by phosphatidylinositol binding and which binds to the GET3 homodimer.

The protein resides in the endoplasmic reticulum membrane. It is found in the golgi apparatus membrane. Functionally, required for the post-translational delivery of tail-anchored (TA) proteins to the endoplasmic reticulum. Together with GET1, acts as a membrane receptor for soluble GET3, which recognizes and selectively binds the transmembrane domain of TA proteins in the cytosol. The GET complex cooperates with the HDEL receptor ERD2 to mediate the ATP-dependent retrieval of resident ER proteins that contain a C-terminal H-D-E-L retention signal from the Golgi to the ER. This Lodderomyces elongisporus (strain ATCC 11503 / CBS 2605 / JCM 1781 / NBRC 1676 / NRRL YB-4239) (Yeast) protein is Golgi to ER traffic protein 2.